A 379-amino-acid polypeptide reads, in one-letter code: uncharacterized protein (379 aa).

3 disordered regions span residues 1–37, 130–150, and 332–379; these read MSSI…SGQT, VRYS…LSPE, and NPPI…RGSR.

The protein belongs to the chlamydial CPn_0499/CT_392/TC_0671 family.

This is an uncharacterized protein from Chlamydia muridarum (strain MoPn / Nigg).